We begin with the raw amino-acid sequence, 396 residues long: MADVYLDNNATTRVDDEIVEAMLPFFTEQFGNPSSLHSFGNQVGLALKRARQQRAGVLGEHDSEIIFTSCGTESDHAILSALSPARAQDLITTVVEHPAVLSLCDYLASEGYTVHKLPVDKKGRLDLDHYASLLNDDVAVVSVMWANNETGTLFPVEEMARMADEAGIMFHTDAVQAVRKLPIDLKNSSIHMLSLSGHKLHRKGVGVLYLRRGTRFRRCCRGHQERPAGGTENAASIIAMGWAAERALAFMEHENTEVKRLRDKLEAGILAVVPHAFVTGDPDNRLPNTANIAFEYIEGEAILLLLNKVGIAASSGSACTSGSLEPSHVMRAMDIPYTAAHGTVRFSLSRYTTEEEIDRVIREVPPIVAQLRNVSPYWSGNGPVEHPGKAFAPVYG.

Pyridoxal 5'-phosphate-binding positions include 71-72 (GT), Asn148, Gln176, and 196-198 (SGH). Lys199 is modified (N6-(pyridoxal phosphate)lysine). Thr231 is a binding site for pyridoxal 5'-phosphate. Cys319 acts as the Cysteine persulfide intermediate in catalysis. Cys319 is a binding site for [2Fe-2S] cluster.

It belongs to the class-V pyridoxal-phosphate-dependent aminotransferase family. NifS/IscS subfamily. In terms of assembly, homodimer. It depends on pyridoxal 5'-phosphate as a cofactor.

The catalysed reaction is (sulfur carrier)-H + L-cysteine = (sulfur carrier)-SH + L-alanine. Catalyzes the removal of elemental sulfur atoms from cysteine to produce alanine. Seems to participate in the biosynthesis of the nitrogenase metalloclusters by providing the inorganic sulfur required for the Fe-S core formation. This is Cysteine desulfurase from Azotobacter chroococcum mcd 1.